The following is a 66-amino-acid chain: Beta-toxin Cb3 (66 aa).

The region spanning 1–66 (KEGYIVNYYD…VWPLPNKTCL (66 aa)) is the LCN-type CS-alpha/beta domain. Disulfide bonds link C12/C65, C16/C41, C25/C46, and C29/C48.

It belongs to the long (4 C-C) scorpion toxin superfamily. Sodium channel inhibitor family. Beta subfamily. Expressed by the venom gland.

The protein localises to the secreted. Its function is as follows. Beta toxins bind voltage-independently at site-4 of sodium channels (Nav) and reduces peak current and shifts the voltage of activation toward more negative potentials thereby affecting sodium channel activation and promoting spontaneous and repetitive firing. Has an inhibitory effect on voltage-gated sodium channels hNav1.1/SCN1A, hNav1.2/SCN2A, hNav1.4/SCN4A and hNav1.6/SCN8A. Reduces the peak current of hNav1.5/SCN5A but does not shift its voltage of activation. Also affects the inactivation processes of hNav1.1/SCN1A, hNav1.4/SCN4A, hNav1.5/SCN5A and hNav1.6/SCN8A. This toxin is active against mammals and lethal to mice. The protein is Beta-toxin Cb3 of Centruroides baergi (Scorpion).